The sequence spans 196 residues: Imidazoleglycerol-phosphate dehydratase (196 aa).

It belongs to the imidazoleglycerol-phosphate dehydratase family.

It localises to the cytoplasm. It catalyses the reaction D-erythro-1-(imidazol-4-yl)glycerol 3-phosphate = 3-(imidazol-4-yl)-2-oxopropyl phosphate + H2O. Its pathway is amino-acid biosynthesis; L-histidine biosynthesis; L-histidine from 5-phospho-alpha-D-ribose 1-diphosphate: step 6/9. The protein is Imidazoleglycerol-phosphate dehydratase of Clostridium botulinum (strain Kyoto / Type A2).